The primary structure comprises 748 residues: NAD(P)H-quinone oxidoreductase subunit 5, chloroplastic (748 aa).

Transmembrane regions (helical) follow at residues 9–29 (WIIP…LLLF), 40–60 (WSFP…YLSI), 89–109 (IDPL…MVLI), 125–145 (FAYM…SNLI), 147–167 (IYIF…FWFT), 185–205 (GDFG…SFEF), 219–239 (NEVN…GAVA), 258–278 (TPIS…FLVA), 280–300 (LLPL…IGII), 327–347 (LGYM…FHLI), 354–374 (ALLF…VGYS), 396–416 (NAFL…CFWS), 425–445 (WLYS…TAFY), 550–570 (LFPM…GSPF), 611–631 (ATFS…FYKP), and 728–748 (YILL…FVFF).

Belongs to the complex I subunit 5 family. NDH is composed of at least 16 different subunits, 5 of which are encoded in the nucleus.

It localises to the plastid. Its subcellular location is the chloroplast thylakoid membrane. The enzyme catalyses a plastoquinone + NADH + (n+1) H(+)(in) = a plastoquinol + NAD(+) + n H(+)(out). It catalyses the reaction a plastoquinone + NADPH + (n+1) H(+)(in) = a plastoquinol + NADP(+) + n H(+)(out). Its function is as follows. NDH shuttles electrons from NAD(P)H:plastoquinone, via FMN and iron-sulfur (Fe-S) centers, to quinones in the photosynthetic chain and possibly in a chloroplast respiratory chain. The immediate electron acceptor for the enzyme in this species is believed to be plastoquinone. Couples the redox reaction to proton translocation, and thus conserves the redox energy in a proton gradient. The polypeptide is NAD(P)H-quinone oxidoreductase subunit 5, chloroplastic (ndhF) (Cucumis sativus (Cucumber)).